Reading from the N-terminus, the 293-residue chain is Elongation factor Ts (293 aa).

The segment at 79 to 82 is involved in Mg(2+) ion dislocation from EF-Tu; it reads TDFV.

The protein belongs to the EF-Ts family.

The protein localises to the cytoplasm. Its function is as follows. Associates with the EF-Tu.GDP complex and induces the exchange of GDP to GTP. It remains bound to the aminoacyl-tRNA.EF-Tu.GTP complex up to the GTP hydrolysis stage on the ribosome. This Exiguobacterium sibiricum (strain DSM 17290 / CCUG 55495 / CIP 109462 / JCM 13490 / 255-15) protein is Elongation factor Ts.